The sequence spans 380 residues: Histidinol-phosphate aminotransferase (380 aa).

Residue Lys232 is modified to N6-(pyridoxal phosphate)lysine.

It belongs to the class-II pyridoxal-phosphate-dependent aminotransferase family. Histidinol-phosphate aminotransferase subfamily. As to quaternary structure, homodimer. Pyridoxal 5'-phosphate serves as cofactor.

It carries out the reaction L-histidinol phosphate + 2-oxoglutarate = 3-(imidazol-4-yl)-2-oxopropyl phosphate + L-glutamate. It participates in amino-acid biosynthesis; L-histidine biosynthesis; L-histidine from 5-phospho-alpha-D-ribose 1-diphosphate: step 7/9. The chain is Histidinol-phosphate aminotransferase from Mycobacterium bovis (strain BCG / Pasteur 1173P2).